Reading from the N-terminus, the 745-residue chain is Dipeptidyl aminopeptidase 4 (745 aa).

The signal sequence occupies residues 1 to 22; the sequence is MRLALFALFALMTVATALPAHA. Substrate contacts are provided by Glu-208 and Glu-209. Active-site charge relay system residues include Ser-613, Asp-689, and His-721.

The protein belongs to the peptidase S9B family. In terms of assembly, homodimer.

The protein localises to the cytoplasm. It is found in the periplasm. The catalysed reaction is Release of an N-terminal dipeptide, Xaa-Yaa-|-Zaa-, from a polypeptide, preferentially when Yaa is Pro, provided Zaa is neither Pro nor hydroxyproline.. Completely inhibited by the serine protease inhibitor diisopropyl fluorophosphate (DFP) and moderately by N-tosyl-L-phenyl-alanyl chloromethyl ketone (TPCK). Somewhat inhibited by phenylmethanesulfonyl fluoride (PMSF). Activity is not affected by thiol- or metalloprotease inhibitors, such as iodoacetate (IAA), EDTA, N-tosyl-L-lysyl chloromethyl ketone (TLCK), o-phenanthlorine, N-ethylmaleimide (NEM) or dithiothreitol (DTT). Functionally, catalyzes the sequential release of Tyr-Pro, Phe-Pro and Gly-Pro from the N-terminus of peptides and proteins. Is able to cleaves bioactive peptide beta-casomorphin. The polypeptide is Dipeptidyl aminopeptidase 4 (Pseudoxanthomonas mexicana).